Consider the following 296-residue polypeptide: MSETTYVKQCAYGKTLVRFMKKDICPKTKTHTVYEMDVQSLLTGELEESYTKADNSIVVPTDTQKNTIYVFAKNNDVSVPEVFAAKLAKHFVDKYKHIHGAALDITITPWTRMEVQGKPHSHSFIRNPGETRKTHVVFSEGKGFDVVSSLKDVLVLKSTGSGFTNFHKCEFTTLPEVTDRIFSTSIDCNYTFKHFDTFEELAGFDFNSIYEKVKEITLETFALDDSESVQATMYKMADTIINTYPAINEVYYALPNKHYFEINLAPFNIDNLGSNCSLYQPQAYPSGYITCTVARK.

Active-site charge relay system residues include Lys-14 and Thr-61. 7 residues coordinate urate: Thr-61, Asp-62, Phe-163, Arg-180, Val-229, Gln-230, and Asn-256. His-258 (charge relay system) is an active-site residue.

This sequence belongs to the uricase family.

It is found in the peroxisome. The protein localises to the cytoplasm. It localises to the nucleus. It catalyses the reaction urate + O2 + H2O = 5-hydroxyisourate + H2O2. It participates in purine metabolism; urate degradation; (S)-allantoin from urate: step 1/3. Its function is as follows. Catalyzes the oxidation of uric acid to 5-hydroxyisourate, which is further processed to form (S)-allantoin. The protein is Uricase of Schizosaccharomyces pombe (strain 972 / ATCC 24843) (Fission yeast).